The chain runs to 744 residues: 1,4-alpha-glucan branching enzyme GlgB (744 aa).

The tract at residues 1–23 is disordered; it reads MSGPEDPADRRHGEVPAPRRDIP. The segment covering 7-23 has biased composition (basic and acidic residues); sequence PADRRHGEVPAPRRDIP. D424 acts as the Nucleophile in catalysis. E476 functions as the Proton donor in the catalytic mechanism.

This sequence belongs to the glycosyl hydrolase 13 family. GlgB subfamily. As to quaternary structure, monomer.

It catalyses the reaction Transfers a segment of a (1-&gt;4)-alpha-D-glucan chain to a primary hydroxy group in a similar glucan chain.. The protein operates within glycan biosynthesis; glycogen biosynthesis. Its function is as follows. Catalyzes the formation of the alpha-1,6-glucosidic linkages in glycogen by scission of a 1,4-alpha-linked oligosaccharide from growing alpha-1,4-glucan chains and the subsequent attachment of the oligosaccharide to the alpha-1,6 position. The sequence is that of 1,4-alpha-glucan branching enzyme GlgB from Nocardia farcinica (strain IFM 10152).